Consider the following 266-residue polypeptide: MATVPEPTNEVMAYYSDENDLLFEADGPKQMKCCVQPLDLNSMGDGSIHLQISHQLYNKSLRRVVSVIVAVEKLQKIPCSQTFQDDGLRSIFSLIFEEEPVIFETYDDDLLCDAGVQSLTCKLQDRDQKSLVLASPCVLKALHLLARDVNREVVFCMSFVQGDESNDKIPVALGLKEKNLYLSCVMKGDRPTLQLEEVDPKTYPKWKMEKRFVFNKTEIKNSVEFESALYPNWYISTSQAEEKPIFLGRSKGGHDITDFTMEIISP.

A propeptide spanning residues 1–113 (MATVPEPTNE…ETYDDDLLCD (113 aa)) is cleaved from the precursor.

The protein belongs to the IL-1 family. Monomer. In its precursor form, weakly interacts with full-length MEFV; the mature cytokine does not interact at all. Interacts with integrins ITGAV:ITGBV and ITGA5:ITGB1; integrin-binding is required for IL1B signaling. Interacts with cargo receptor TMED10; the interaction is direct and is required for the secretion of IL1B mature form. Interacts with HSP90AB1; the interaction facilitates cargo translocation into the ERGIC. Interacts with HSP90B1; the interaction facilitates cargo translocation into the ERGIC.

It localises to the cytoplasm. It is found in the cytosol. The protein resides in the secreted. The protein localises to the lysosome. Its subcellular location is the extracellular exosome. Potent pro-inflammatory cytokine. Initially discovered as the major endogenous pyrogen, induces prostaglandin synthesis, neutrophil influx and activation, T-cell activation and cytokine production, B-cell activation and antibody production, and fibroblast proliferation and collagen production. Promotes Th17 differentiation of T-cells. Synergizes with IL12/interleukin-12 to induce IFNG synthesis from T-helper 1 (Th1) cells. Plays a role in angiogenesis by inducing VEGF production synergistically with TNF and IL6. Involved in transduction of inflammation downstream of pyroptosis: its mature form is specifically released in the extracellular milieu by passing through the gasdermin-D (GSDMD) pore. This chain is Interleukin-1 beta (IL1B), found in Delphinapterus leucas (Beluga whale).